The primary structure comprises 737 residues: Transcriptional repressor CTCF (737 aa).

At methionine 1 the chain carries N-acetylmethionine. Lysine 18 is covalently cross-linked (Glycyl lysine isopeptide (Lys-Gly) (interchain with G-Cter in SUMO2)). A Glycyl lysine isopeptide (Lys-Gly) (interchain with G-Cter in SUMO) cross-link involves residue lysine 74. A disordered region spans residues 180 to 211; it reads QGELPPQEDPSWQKDPDYQPPAKKTKKTKKSK. The span at 202–211 shows a compositional bias: basic residues; it reads KKTKKTKKSK. Lysine 219 participates in a covalent cross-link: Glycyl lysine isopeptide (Lys-Gly) (interchain with G-Cter in SUMO2). The C2H2-type 1 zinc finger occupies 266-288; that stretch reads FQCELCSYTCPRRSNLDRHMKSH. Residue threonine 289 is modified to Phosphothreonine. The C2H2-type 2 zinc-finger motif lies at 294 to 316; that stretch reads HKCHLCGRAFRTVTLLRNHLNTH. Threonine 317 carries the post-translational modification Phosphothreonine. C2H2-type zinc fingers lie at residues 322-345 and 351-373; these read HKCP…RYKH and FKCS…IRSH. Phosphothreonine is present on threonine 374. The C2H2-type 5 zinc-finger motif lies at 379–401; it reads FQCSLCSYASRDTYKLKRHMRTH. The residue at position 402 (serine 402) is a Phosphoserine. 5 consecutive C2H2-type zinc fingers follow at residues 407 to 430, 437 to 460, 467 to 489, 495 to 517, and 523 to 546; these read YECY…LQKH, FHCP…RKQH, KKCR…QKSH, FKCD…KRTH, and YACS…KRYH. A C2H2-type 11; atypical zinc finger spans residues 555 to 577; sequence FVCSKCGKTFTRRNTMARHADNC. 2 disordered regions span residues 573–687 and 699–727; these read HADN…EDQN and KKEP…GDLT. A compositionally biased stretch (basic residues) spans 593 to 604; the sequence is KSKRGRKRKMRS. Phosphoserine is present on residues serine 609, serine 610, and serine 612. Over residues 610 to 636 the composition is skewed to acidic residues; that stretch reads SDSENAEPDLDDNEEEEEPAVEIEPEP. Pro residues predominate over residues 637–657; sequence EPQPQPQPQPQPQPVAPAPPP. Polar residues predominate over residues 668-687; that stretch reads RTNQPKQNQPTAIIQVEDQN. Residue lysine 699 forms a Glycyl lysine isopeptide (Lys-Gly) (interchain with G-Cter in SUMO); alternate linkage. Lysine 699 is covalently cross-linked (Glycyl lysine isopeptide (Lys-Gly) (interchain with G-Cter in SUMO2); alternate). The segment covering 704–714 has biased composition (acidic residues); that stretch reads AEPAEGEEEEA.

It belongs to the CTCF zinc-finger protein family. Interacts with CHD8. Interacts with LLPH. Interacts with CENPE. Interacts with BRD2; promoting BRD2 recruitment to chromatin. Post-translationally, sumoylated on Lys-74 and Lys-699; sumoylation of CTCF contributes to the repressive function of CTCF on the MYC P2 promoter.

It localises to the nucleus. The protein resides in the nucleoplasm. The protein localises to the chromosome. It is found in the centromere. Chromatin binding factor that binds to DNA sequence specific sites and regulates the 3D structure of chromatin. Binds together strands of DNA, thus forming chromatin loops, and anchors DNA to cellular structures, such as the nuclear lamina. Defines the boundaries between active and heterochromatic DNA via binding to chromatin insulators, thereby preventing interaction between promoter and nearby enhancers and silencers. Plays a critical role in the epigenetic regulation. Participates in the allele-specific gene expression at the imprinted IGF2/H19 gene locus. On the maternal allele, binding within the H19 imprinting control region (ICR) mediates maternally inherited higher-order chromatin conformation to restrict enhancer access to IGF2. Mediates interchromosomal association between IGF2/H19 and WSB1/NF1 and may direct distant DNA segments to a common transcription factory. Regulates asynchronous replication of IGF2/H19. Plays a critical role in gene silencing over considerable distances in the genome. Preferentially interacts with unmethylated DNA, preventing spreading of CpG methylation and maintaining methylation-free zones. Inversely, binding to target sites is prevented by CpG methylation. Plays an important role in chromatin remodeling. Can dimerize when it is bound to different DNA sequences, mediating long-range chromatin looping. Causes local loss of histone acetylation and gain of histone methylation in the beta-globin locus, without affecting transcription. When bound to chromatin, it provides an anchor point for nucleosomes positioning. Seems to be essential for homologous X-chromosome pairing. May participate with Tsix in establishing a regulatable epigenetic switch for X chromosome inactivation. May play a role in preventing the propagation of stable methylation at the escape genes from X-inactivation. Involved in sister chromatid cohesion. Associates with both centromeres and chromosomal arms during metaphase and required for cohesin localization to CTCF sites. Plays a role in the recruitment of CENPE to the pericentromeric/centromeric regions of the chromosome during mitosis. Acts as a transcriptional repressor binding to promoters of vertebrate MYC gene and BAG1 gene. Also binds to the PLK and PIM1 promoters. Acts as a transcriptional activator of APP. Regulates APOA1/C3/A4/A5 gene cluster and controls MHC class II gene expression. Plays an essential role in oocyte and preimplantation embryo development by activating or repressing transcription. Seems to act as tumor suppressor. This chain is Transcriptional repressor CTCF (Ctcf), found in Rattus norvegicus (Rat).